A 358-amino-acid chain; its full sequence is Phospho-N-acetylmuramoyl-pentapeptide-transferase (358 aa).

10 helical membrane passes run 27–47 (LFNN…SLFA), 81–101 (MGGV…TINL), 106–126 (LFLL…DDYL), 147–167 (VISI…PLVI), 171–191 (SWVI…LVGI), 201–221 (LDGL…TEIL), 228–248 (LFVF…FLKY), 255–275 (IFMG…IALL), 278–298 (SVFT…SVII), and 336–356 (IVEN…VLKI).

This sequence belongs to the glycosyltransferase 4 family. MraY subfamily. Mg(2+) is required as a cofactor.

The protein localises to the cell inner membrane. It catalyses the reaction UDP-N-acetyl-alpha-D-muramoyl-L-alanyl-gamma-D-glutamyl-meso-2,6-diaminopimeloyl-D-alanyl-D-alanine + di-trans,octa-cis-undecaprenyl phosphate = di-trans,octa-cis-undecaprenyl diphospho-N-acetyl-alpha-D-muramoyl-L-alanyl-D-glutamyl-meso-2,6-diaminopimeloyl-D-alanyl-D-alanine + UMP. The protein operates within cell wall biogenesis; peptidoglycan biosynthesis. Its function is as follows. Catalyzes the initial step of the lipid cycle reactions in the biosynthesis of the cell wall peptidoglycan: transfers peptidoglycan precursor phospho-MurNAc-pentapeptide from UDP-MurNAc-pentapeptide onto the lipid carrier undecaprenyl phosphate, yielding undecaprenyl-pyrophosphoryl-MurNAc-pentapeptide, known as lipid I. The chain is Phospho-N-acetylmuramoyl-pentapeptide-transferase from Prochlorococcus marinus (strain MIT 9215).